The following is a 237-amino-acid chain: Pyridoxal phosphate homeostasis protein (237 aa).

The residue at position 31 (Lys-31) is an N6-(pyridoxal phosphate)lysine.

It belongs to the pyridoxal phosphate-binding protein YggS/PROSC family.

It is found in the cytoplasm. The protein resides in the nucleus. Functionally, pyridoxal 5'-phosphate (PLP)-binding protein, which may be involved in intracellular homeostatic regulation of pyridoxal 5'-phosphate (PLP), the active form of vitamin B6. The protein is Pyridoxal phosphate homeostasis protein of Schizosaccharomyces pombe (strain 972 / ATCC 24843) (Fission yeast).